Consider the following 188-residue polypeptide: MATYEVLCEVARKLGTDDREVVLFLLNVFIPQPTLAQLIGALRALKEEGRLTFPLLAECLFRAGRRDLLRDLLHLDPRFLERHLAGTMSYFSPYQLTVLHVDGELCARDIRSLIFLSKDTIGSRSTPQTFLHWVYCMENLDLLGPTDVDALMSMLRSLSRVDLQRQVQTLMGLHLSGPSHSQHYRHTP.

2 DED domains span residues 2–74 (ATYE…DLLH) and 93–169 (PYQL…QVQT).

In terms of assembly, interacts with host RIPK1, TRAF2, MAP3K14, IKBKB, and IKBKG. Interacts with host CADM1; this interaction is essential for chronic NF-kappa-B activation.

In terms of biological role, plays a role in the modulation of host signaling pathways by acting as an activator of both the classic and the alternative NF-kappa-B pathways. Thereby, initiates an important range of cellular processes to promote cell survival, proliferation and protection from apoptosis. The polypeptide is Viral FLICE protein (ORF71) (Human herpesvirus 8 type P (isolate GK18) (HHV-8)).